The sequence spans 326 residues: MATIKDVAGAAGVSVATVSRNLNDNGYVHEETRTRVIAAMAKLNYYPNEVARSLYKRESRLIGLLLPDITNPFFPQLARGAEDELNREGYRLIFGNSDEELKKELEYLQTFKQNHVAGIIAATNYPDLEEYSGMNYPVVFLDRTLEGAPSVSSDGYTGVKLAAQAIIHGKSQRITLLRGPAHLPTAQDRFNGALEILKQAEVDFQVIETASFSIKDAQSMAKELFASYPATDGVIASNDIQAAAVLHEALRRGKNVPEDIQIIGYDDIPQSGLLFPPLSTIKQPAYDMGKEAAKLLLGIIKKQPLAETAIQMPVTYIGRKTTRKED.

An HTH lacI-type domain is found at 1–56 (MATIKDVAGAAGVSVATVSRNLNDNGYVHEETRTRVIAAMAKLNYYPNEVARSLYK). The H-T-H motif DNA-binding region spans 4-23 (IKDVAGAAGVSVATVSRNLN).

In terms of biological role, transcriptional repressor for the ribose rbsDACBK operon. This Bacillus subtilis (strain 168) protein is Ribose operon repressor (rbsR).